We begin with the raw amino-acid sequence, 176 residues long: Ribosome maturation factor RimM (176 aa).

The PRC barrel domain occupies 99-174; that stretch reads KDEFYVRDLI…IVLIQPELWN (76 aa).

Belongs to the RimM family. As to quaternary structure, binds ribosomal protein uS19.

Its subcellular location is the cytoplasm. An accessory protein needed during the final step in the assembly of 30S ribosomal subunit, possibly for assembly of the head region. Essential for efficient processing of 16S rRNA. May be needed both before and after RbfA during the maturation of 16S rRNA. It has affinity for free ribosomal 30S subunits but not for 70S ribosomes. This is Ribosome maturation factor RimM from Leptospira borgpetersenii serovar Hardjo-bovis (strain JB197).